Reading from the N-terminus, the 468-residue chain is Acid phosphatase PHO1 (468 aa).

An N-terminal signal peptide occupies residues 1 to 22 (MFSPILSLEIILALATLQSVFA). Catalysis depends on H84, which acts as the Nucleophile. N-linked (GlcNAc...) asparagine glycans are attached at residues N163, N196, N256, and N321. D346 (proton donor) is an active-site residue. 2 N-linked (GlcNAc...) asparagine glycosylation sites follow: N360 and N453.

This sequence belongs to the histidine acid phosphatase family.

It carries out the reaction a phosphate monoester + H2O = an alcohol + phosphate. This chain is Acid phosphatase PHO1 (PHO1), found in Komagataella pastoris (Yeast).